The chain runs to 481 residues: Xylulose kinase (481 aa).

81-82 (QH) contributes to the substrate binding site. Residue D239 is the Proton acceptor of the active site.

Belongs to the FGGY kinase family.

It carries out the reaction D-xylulose + ATP = D-xylulose 5-phosphate + ADP + H(+). Functionally, catalyzes the phosphorylation of D-xylulose to D-xylulose 5-phosphate. In Streptomyces rubiginosus, this protein is Xylulose kinase.